The primary structure comprises 264 residues: Phosphonoacetaldehyde hydrolase (264 aa).

The active-site Nucleophile is the Asp10. Residues Asp10 and Ala12 each coordinate Mg(2+). Residue Lys52 is the Schiff-base intermediate with substrate of the active site. Asp185 serves as a coordination point for Mg(2+).

The protein belongs to the HAD-like hydrolase superfamily. PhnX family. Homodimer. Requires Mg(2+) as cofactor.

It catalyses the reaction phosphonoacetaldehyde + H2O = acetaldehyde + phosphate + H(+). Involved in phosphonate degradation. This Parabacteroides distasonis (strain ATCC 8503 / DSM 20701 / CIP 104284 / JCM 5825 / NCTC 11152) protein is Phosphonoacetaldehyde hydrolase.